We begin with the raw amino-acid sequence, 431 residues long: O-methyltransferase xanE (431 aa).

Residue Asp-283 participates in S-adenosyl-L-methionine binding. The Proton acceptor role is filled by His-330.

The protein belongs to the class I-like SAM-binding methyltransferase superfamily. Cation-independent O-methyltransferase family.

It participates in secondary metabolite biosynthesis. Functionally, O-methyltransferase; part of the gene cluster that mediates the biosynthesis of the isocyanide xanthocillin and its derivatives. The first step of the pathway consists in the conversion of tyrosine into a vinyl-isonitrile intermediate by the isocyanide synthase xanB. Subsequent oxidative dimerization of this intermediate to form xanthocillin may involve the cytochrome P450 monooxygenase xanG, whose expression is coregulated with that of XanB. Xanthocillin can be further modified by the isonitrile hydratase-like protein xanA which introduces N-formyl groups and the methyltransferase xanE which introduces methyl groups, leading to the production of several derivatives including fumiformamide. Finally, fumiformamide can be subject to both oxidative and reductive cyclization to yield melanocins E and F, respectively. The sequence is that of O-methyltransferase xanE from Aspergillus fumigatus (strain ATCC MYA-4609 / CBS 101355 / FGSC A1100 / Af293) (Neosartorya fumigata).